The following is a 239-amino-acid chain: Guanylate kinase (239 aa).

The region spanning glycine 19–glutamine 197 is the Guanylate kinase-like domain. Glycine 26–glycine 33 is a binding site for ATP.

It belongs to the guanylate kinase family.

The protein resides in the cytoplasm. The catalysed reaction is GMP + ATP = GDP + ADP. Functionally, essential for recycling GMP and indirectly, cGMP. This is Guanylate kinase (gmk) from Deinococcus radiodurans (strain ATCC 13939 / DSM 20539 / JCM 16871 / CCUG 27074 / LMG 4051 / NBRC 15346 / NCIMB 9279 / VKM B-1422 / R1).